A 399-amino-acid chain; its full sequence is Carbamoyl phosphate synthase small chain (399 aa).

The interval Met-1–Glu-204 is CPSase. Residues Ser-60, Gly-256, and Gly-258 each coordinate L-glutamine. The Glutamine amidotransferase type-1 domain occupies His-208–Gln-396. Cys-285 serves as the catalytic Nucleophile. L-glutamine contacts are provided by Leu-286, Gln-289, Asn-327, Gly-329, and Phe-330. Active-site residues include His-369 and Glu-371.

It belongs to the CarA family. As to quaternary structure, composed of two chains; the small (or glutamine) chain promotes the hydrolysis of glutamine to ammonia, which is used by the large (or ammonia) chain to synthesize carbamoyl phosphate. Tetramer of heterodimers (alpha,beta)4.

It carries out the reaction hydrogencarbonate + L-glutamine + 2 ATP + H2O = carbamoyl phosphate + L-glutamate + 2 ADP + phosphate + 2 H(+). It catalyses the reaction L-glutamine + H2O = L-glutamate + NH4(+). It participates in amino-acid biosynthesis; L-arginine biosynthesis; carbamoyl phosphate from bicarbonate: step 1/1. The protein operates within pyrimidine metabolism; UMP biosynthesis via de novo pathway; (S)-dihydroorotate from bicarbonate: step 1/3. Small subunit of the glutamine-dependent carbamoyl phosphate synthetase (CPSase). CPSase catalyzes the formation of carbamoyl phosphate from the ammonia moiety of glutamine, carbonate, and phosphate donated by ATP, constituting the first step of 2 biosynthetic pathways, one leading to arginine and/or urea and the other to pyrimidine nucleotides. The small subunit (glutamine amidotransferase) binds and cleaves glutamine to supply the large subunit with the substrate ammonia. The chain is Carbamoyl phosphate synthase small chain from Bartonella bacilliformis (strain ATCC 35685 / KC583 / Herrer 020/F12,63).